We begin with the raw amino-acid sequence, 352 residues long: Non-disjunction protein 1 (352 aa).

In terms of assembly, interacts with MPS3.

It is found in the nucleus. It localises to the chromosome. The protein resides in the telomere. Its function is as follows. Required for telomeric clustering (bouquet stage) during meiosis 1 prophase, formation and efficient homolog pairing, meiosis 1 disjunction, and telomere deletion during meiosis. Also promotes meiotic recombination. This chain is Non-disjunction protein 1 (NDJ1), found in Saccharomyces cerevisiae (strain ATCC 204508 / S288c) (Baker's yeast).